Here is an 891-residue protein sequence, read N- to C-terminus: Alanine--tRNA ligase (891 aa).

Positions 564, 568, 681, and 685 each coordinate Zn(2+).

The protein belongs to the class-II aminoacyl-tRNA synthetase family. Requires Zn(2+) as cofactor.

The protein localises to the cytoplasm. It catalyses the reaction tRNA(Ala) + L-alanine + ATP = L-alanyl-tRNA(Ala) + AMP + diphosphate. Catalyzes the attachment of alanine to tRNA(Ala) in a two-step reaction: alanine is first activated by ATP to form Ala-AMP and then transferred to the acceptor end of tRNA(Ala). Also edits incorrectly charged Ser-tRNA(Ala) and Gly-tRNA(Ala) via its editing domain. This chain is Alanine--tRNA ligase, found in Methylorubrum extorquens (strain PA1) (Methylobacterium extorquens).